Reading from the N-terminus, the 119-residue chain is MTRPETPQAPDFDFEKSRTALLGYRIMAWTTGIWLIALCYEIVSHLVFHHEIRWIEVVHGWVYFVYVLTAFNLAIKVRWPIGKTVGVLLAGTVPLLGIIVEHFQTKDVKTRFGLRHSRT.

3 helical membrane passes run 28-48, 55-75, and 80-100; these read AWTT…HLVF, IEVV…NLAI, and PIGK…GIIV.

It to M.tuberculosis Rv1342c.

It is found in the cell membrane. This is an uncharacterized protein from Mycobacterium leprae (strain TN).